A 258-amino-acid chain; its full sequence is Type III pantothenate kinase (258 aa).

6-13 (DVGNTNIV) serves as a coordination point for ATP. Residues Y100 and 107–110 (GADR) contribute to the substrate site. D109 functions as the Proton acceptor in the catalytic mechanism. Residue D129 participates in K(+) binding. Residue T132 coordinates ATP. Residue T184 participates in substrate binding.

The protein belongs to the type III pantothenate kinase family. Homodimer. NH4(+) is required as a cofactor. K(+) serves as cofactor.

It localises to the cytoplasm. The enzyme catalyses (R)-pantothenate + ATP = (R)-4'-phosphopantothenate + ADP + H(+). It participates in cofactor biosynthesis; coenzyme A biosynthesis; CoA from (R)-pantothenate: step 1/5. In terms of biological role, catalyzes the phosphorylation of pantothenate (Pan), the first step in CoA biosynthesis. This chain is Type III pantothenate kinase, found in Clostridium botulinum (strain Kyoto / Type A2).